The primary structure comprises 24 residues: Waglerin-3 (24 aa).

Basic and acidic residues predominate over residues 1-10 (SLGGKPDLRP). The disordered stretch occupies residues 1–24 (SLGGKPDLRPCHPPCHYIPRPKPR). Cys11 and Cys15 are disulfide-bonded.

Belongs to the waglerin family. In terms of assembly, waglerin-1 is monomeric. Amidation of the waglerin-1 C-terminus increases the affinity by 2-fold. Expressed by the venom gland.

Its subcellular location is the secreted. Its function is as follows. Waglerin-1 selectively blocks the epsilon subunit of muscle nicotinic acetylcholine receptor (nAChR). Also has effects on rodent ionotropic GABA(A) receptors (GABR), since it potentiates I(GABA) in some neurons and depresses I(GABA) in others. In mice, it elicits tachypnea, ocular proptosis, rapid collapse and spasms, whereas no toxic effects on respiration and blood pressure are observed in rats. Functionally, waglerin-3 selectively blocks the epsilon subunit of muscle nicotinic acetylcholine receptor (nAChR). It elicits tachypnea, ocular proptosis, rapid collapse and spasms in mice. It causes death by respiratory failure. The sequence is that of Waglerin-3 from Tropidolaemus wagleri (Wagler's pit viper).